Reading from the N-terminus, the 322-residue chain is PI-PLC X domain-containing protein 3 (322 aa).

The 176-residue stretch at 22-197 (TLHGIPLTNL…EYQVLVFYHN (176 aa)) folds into the PI-PLC X-box domain. Active-site residues include His37 and His114.

The sequence is that of PI-PLC X domain-containing protein 3 (plcxd3) from Danio rerio (Zebrafish).